Consider the following 118-residue polypeptide: Large ribosomal subunit protein bL20 (118 aa).

This sequence belongs to the bacterial ribosomal protein bL20 family.

Binds directly to 23S ribosomal RNA and is necessary for the in vitro assembly process of the 50S ribosomal subunit. It is not involved in the protein synthesizing functions of that subunit. In Synechococcus sp. (strain JA-2-3B'a(2-13)) (Cyanobacteria bacterium Yellowstone B-Prime), this protein is Large ribosomal subunit protein bL20.